The following is a 298-amino-acid chain: Syntenin-1 (298 aa).

Ser-2 carries the N-acetylserine modification. The tract at residues 2-60 (SLYPSLEDLKVDKVIQAQTAFSANPANPAILSEASAPIPHDGNLYPRLYPELSQYMGLS) is interaction with PDCD6IP. Short sequence motifs (LYPX(n)L motif) lie at residues 3–7 (LYPSL), 45–49 (LYPRL), and 49–53 (LYPEL). Ser-6 carries the phosphoserine modification. Tyr-46 carries the phosphotyrosine modification. PDZ domains are found at residues 114-193 (EVIL…IRDR) and 198-273 (TITM…MPAF). Residues Asn-215 and 250–251 (KD) contribute to the a 1,2-diacyl-sn-glycero-3-phospho-(1D-myo-inositol-4,5-bisphosphate) site.

As to quaternary structure, monomer and homodimer. Interacts with SDC1, SDC2, SDC3, SDC4, NRXN2, EPHA7, EPHB1, NF2 isoform 1, TGFA and IL5RA. Interacts with NFASC and PTPRJ. Interacts with SDCBP2. Interacts with PDCD6IP. Forms a complex with PDCD6IP and SDC2. Interacts (via C-terminus) with TGFBR1. Binds to FZD7; this interaction is increased by inositol trisphosphate (IP3). Interacts with SMO. Post-translationally, phosphorylated on tyrosine residues. Expressed in lung cancers, including adenocarcinoma, squamous cell carcinoma and small-cell carcinoma (at protein level). Widely expressed. Expressed in fetal kidney, liver, lung and brain. In adult highest expression in heart and placenta.

The protein localises to the cell junction. The protein resides in the focal adhesion. It localises to the adherens junction. Its subcellular location is the cell membrane. It is found in the endoplasmic reticulum membrane. The protein localises to the nucleus. The protein resides in the melanosome. It localises to the cytoplasm. Its subcellular location is the cytosol. It is found in the cytoskeleton. The protein localises to the secreted. The protein resides in the extracellular exosome. It localises to the membrane raft. Multifunctional adapter protein involved in diverse array of functions including trafficking of transmembrane proteins, neuro and immunomodulation, exosome biogenesis, and tumorigenesis. Positively regulates TGFB1-mediated SMAD2/3 activation and TGFB1-induced epithelial-to-mesenchymal transition (EMT) and cell migration in various cell types. May increase TGFB1 signaling by enhancing cell-surface expression of TGFR1 by preventing the interaction between TGFR1 and CAV1 and subsequent CAV1-dependent internalization and degradation of TGFR1. In concert with SDC1/4 and PDCD6IP, regulates exosome biogenesis. Regulates migration, growth, proliferation, and cell cycle progression in a variety of cancer types. In adherens junctions may function to couple syndecans to cytoskeletal proteins or signaling components. Seems to couple transcription factor SOX4 to the IL-5 receptor (IL5RA). May also play a role in vesicular trafficking. Seems to be required for the targeting of TGFA to the cell surface in the early secretory pathway. The sequence is that of Syntenin-1 (SDCBP) from Homo sapiens (Human).